The primary structure comprises 599 residues: Putative sensor histidine kinase NtrY-like (599 aa).

4 helical membrane-spanning segments follow: residues 17–37, 44–64, 85–105, and 285–305; these read ILIL…FYVI, FSTI…LGIL, IVIA…VFSV, and IMFI…GVLF. Residues 307-361 form the HAMP domain; it reads AQIVKPIKKLVTATDKVKDGDLTVQVPENEVDKDEIGTLYVAFNRMIKQLSRQQR. One can recognise a Histidine kinase domain in the interval 378–589; the sequence is KVAHEIKNPL…IIDIKFDLKE (212 aa). Histidine 381 carries the phosphohistidine; by autocatalysis modification.

It localises to the cell membrane. The enzyme catalyses ATP + protein L-histidine = ADP + protein N-phospho-L-histidine.. In terms of biological role, member of the two-component regulatory system RT0603/RT0550. This chain is Putative sensor histidine kinase NtrY-like, found in Rickettsia typhi (strain ATCC VR-144 / Wilmington).